Reading from the N-terminus, the 388-residue chain is Xylose isomerase (388 aa).

Active-site residues include His-54 and Asp-57. Mg(2+) contacts are provided by Glu-181, Glu-217, His-220, Asp-245, Asp-255, Asp-257, and Asp-287.

This sequence belongs to the xylose isomerase family. In terms of assembly, homotetramer. The cofactor is Mg(2+).

It localises to the cytoplasm. The enzyme catalyses alpha-D-xylose = alpha-D-xylulofuranose. In Streptomyces olivaceoviridis (Streptomyces corchorusii), this protein is Xylose isomerase.